We begin with the raw amino-acid sequence, 439 residues long: Ectonucleotide pyrophosphatase/phosphodiesterase family member 7 (439 aa).

The first 21 residues, Met1–Gly21, serve as a signal peptide directing secretion. At Ala22 to Ser414 the chain is on the extracellular side. Residues Asp36 and Thr72 each contribute to the Zn(2+) site. Residues Val69–Cys75 form a required for enzyme activity region. Thr72 serves as the catalytic Nucleophile. Residue Asn93 participates in substrate binding. Asn97, Asn118, Asn143, and Asn165 each carry an N-linked (GlcNAc...) asparagine glycan. The Zn(2+) site is built by Asp196, His200, Asp243, and His244. An N-linked (GlcNAc...) asparagine glycan is attached at Asn264. Zn(2+) is bound at residue His350. Residues Ala415–Leu435 traverse the membrane as a helical segment. The Cytoplasmic portion of the chain corresponds to Ala436–Leu439.

Requires Zn(2+) as cofactor. Post-translationally, N-glycosylated; required for activity and transport to the plasma membrane. Expressed in liver and small intestine.

The protein localises to the cell membrane. The catalysed reaction is a sphingomyelin + H2O = phosphocholine + an N-acylsphing-4-enine + H(+). It carries out the reaction a 1-O-alkyl-2-acetyl-sn-glycero-3-phosphocholine + H2O = a 1-O-alkyl-2-acetyl-sn-glycerol + phosphocholine + H(+). It catalyses the reaction 1-O-octadecyl-2-acetyl-sn-glycero-3-phosphocholine + H2O = 1-O-octadecyl-2-acetyl-sn-glycerol + phosphocholine + H(+). The enzyme catalyses 1-hexadecanoyl-sn-glycero-3-phosphocholine + H2O = 1-hexadecanoyl-sn-glycerol + phosphocholine + H(+). Choline-specific phosphodiesterase that hydrolyzes sphingomyelin releasing the ceramide and phosphocholine and therefore is involved in sphingomyelin digestion, ceramide formation, and fatty acid (FA) absorption in the gastrointestinal tract. Also has phospholipase C activity and can also cleave phosphocholine from palmitoyl lyso-phosphatidylcholine and platelet-activating factor (PAF) leading to its inactivation. Does not have nucleotide pyrophosphatase activity. May promote cholesterol absorption by affecting the levels of sphingomyelin derived from either diet or endogenous sources, in the intestinal lumen. In Mus musculus (Mouse), this protein is Ectonucleotide pyrophosphatase/phosphodiesterase family member 7.